The following is a 459-amino-acid chain: Spermatogenesis-associated protein 1 (459 aa).

Basic and acidic residues predominate over residues 193–205 (LKELPNKNQEEAG). Residues 193 to 213 (LKELPNKNQEEAGGKATAEKS) form a disordered region. Coiled coils occupy residues 287–374 (TDIS…YKKL) and 400–453 (LIIQ…KKII).

In terms of assembly, interacts with IFT20.

The protein localises to the cytoplasmic vesicle. The protein resides in the secretory vesicle. It localises to the acrosome. This Homo sapiens (Human) protein is Spermatogenesis-associated protein 1 (SPATA1).